Consider the following 123-residue polypeptide: WAP four-disulfide core domain protein 5 (123 aa).

A signal peptide spans 1-24; sequence MRIQSLLLLGALLAVGSQLPAVFG. 2 WAP domains span residues 27–73 and 74–121; these read KGEK…CIPR and VSVK…RDPA. Disulfide bonds link C34–C62, C41–C66, C49–C61, C55–C70, C81–C109, C88–C113, C96–C108, and C102–C117.

The protein localises to the secreted. In terms of biological role, putative acid-stable proteinase inhibitor. The protein is WAP four-disulfide core domain protein 5 (WFDC5) of Macaca mulatta (Rhesus macaque).